A 644-amino-acid chain; its full sequence is ATP-dependent zinc metalloprotease FtsH (644 aa).

Residues 1–4 (MAKN) lie on the Cytoplasmic side of the membrane. A helical membrane pass occupies residues 5-25 (LILWLVIAVVLMSVFQSFGPS). Topologically, residues 26-98 (ESNGRKVDYS…VGEPPEEPSL (73 aa)) are periplasmic. The chain crosses the membrane as a helical span at residues 99-119 (LASIFISWFPMLLLIGVWIFF). Over 120-644 (MRQMQGGGGK…NTMSEQLGDK (525 aa)) the chain is Cytoplasmic. 192 to 199 (GPPGTGKT) contributes to the ATP binding site. Residue H414 participates in Zn(2+) binding. E415 is a catalytic residue. Zn(2+) contacts are provided by H418 and D492. A disordered region spans residues 598–644 (VRPPAGWEEPGASNNSGDNGSPKAPRPVDEPRTPNPGNTMSEQLGDK). Residues 632 to 644 (NPGNTMSEQLGDK) show a composition bias toward polar residues.

The protein in the central section; belongs to the AAA ATPase family. This sequence in the C-terminal section; belongs to the peptidase M41 family. As to quaternary structure, homohexamer. Requires Zn(2+) as cofactor.

The protein localises to the cell inner membrane. Acts as a processive, ATP-dependent zinc metallopeptidase for both cytoplasmic and membrane proteins. Plays a role in the quality control of integral membrane proteins. This is ATP-dependent zinc metalloprotease FtsH from Shigella flexneri.